Reading from the N-terminus, the 402-residue chain is Leucine aminopeptidase 1 (402 aa).

An N-terminal signal peptide occupies residues 1–18; it reads MKISNASLLALLLPAASA. A propeptide spanning residues 19 to 92 is cleaved from the precursor; the sequence is RFVEQAEQNR…GTFNKRPYKK (74 aa). N111 and N184 each carry an N-linked (GlcNAc...) asparagine glycan. Zn(2+) contacts are provided by H192, D211, E250, and D277. N304 carries N-linked (GlcNAc...) asparagine glycosylation. The cysteines at positions 326 and 330 are disulfide-linked. Position 359 (H359) interacts with Zn(2+).

Belongs to the peptidase M28 family. M28E subfamily. Monomer. It depends on Zn(2+) as a cofactor.

The protein resides in the secreted. Functionally, extracellular aminopeptidase that allows assimilation of proteinaceous substrates. This Neurospora crassa (strain ATCC 24698 / 74-OR23-1A / CBS 708.71 / DSM 1257 / FGSC 987) protein is Leucine aminopeptidase 1 (lap1).